Reading from the N-terminus, the 180-residue chain is Ribulose bisphosphate carboxylase small subunit, chloroplastic 1 (180 aa).

A chloroplast-targeting transit peptide spans 1–56; that stretch reads MASSVISSAAVATRTNVAQASMVAPFNGLKSAVSFPVSSKQNLDITSIASNGGRVQ.

It belongs to the RuBisCO small chain family. As to quaternary structure, heterohexadecamer of 8 large and 8 small subunits.

It localises to the plastid. It is found in the chloroplast. In terms of biological role, ruBisCO catalyzes two reactions: the carboxylation of D-ribulose 1,5-bisphosphate, the primary event in carbon dioxide fixation, as well as the oxidative fragmentation of the pentose substrate. Both reactions occur simultaneously and in competition at the same active site. Although the small subunit is not catalytic it is essential for maximal activity. In Petunia hybrida (Petunia), this protein is Ribulose bisphosphate carboxylase small subunit, chloroplastic 1.